Reading from the N-terminus, the 790-residue chain is Alpha,alpha-trehalose-phosphate synthase [UDP-forming] B (790 aa).

It in the N-terminal section; belongs to the glycosyltransferase 20 family. In the C-terminal section; belongs to the trehalose phosphatase family.

It carries out the reaction D-glucose 6-phosphate + UDP-alpha-D-glucose = alpha,alpha-trehalose 6-phosphate + UDP + H(+). Synthesizes trehalose 6-phosphate, the precursor for the production of trehalose, the main carbohydrate storage reserve of the dormant spore. Trehalose accumulates in both prestalk and prespore cells and then is rapidly metabolized during terminal differentiation of stalk cells, while being stored in spores, where it serves as the principal energy and carbon source for germination. This Dictyostelium discoideum (Social amoeba) protein is Alpha,alpha-trehalose-phosphate synthase [UDP-forming] B (tpsB).